The sequence spans 257 residues: Phosphonates import ATP-binding protein PhnC (257 aa).

The region spanning 4 to 248 (IEFKDVNKVY…VFNDIYGRKL (245 aa)) is the ABC transporter domain. 37 to 44 (GLSGAGKS) lines the ATP pocket.

Belongs to the ABC transporter superfamily. Phosphonates importer (TC 3.A.1.9.1) family. As to quaternary structure, the complex is composed of two ATP-binding proteins (PhnC), two transmembrane proteins (PhnE) and a solute-binding protein (PhnD).

Its subcellular location is the cell membrane. It carries out the reaction phosphonate(out) + ATP + H2O = phosphonate(in) + ADP + phosphate + H(+). Functionally, part of the ABC transporter complex PhnCDE involved in phosphonates import. Responsible for energy coupling to the transport system. The sequence is that of Phosphonates import ATP-binding protein PhnC from Staphylococcus haemolyticus (strain JCSC1435).